The chain runs to 64 residues: Small ribosomal subunit protein bS21 (64 aa).

A disordered region spans residues 26 to 64 (DGILSEARRRTRFERPPTRRKRKDAAKRRLAIKAARKAT). Basic residues predominate over residues 43–64 (TRRKRKDAAKRRLAIKAARKAT).

Belongs to the bacterial ribosomal protein bS21 family.

This chain is Small ribosomal subunit protein bS21, found in Dehalococcoides mccartyi (strain ATCC BAA-2100 / JCM 16839 / KCTC 5957 / BAV1).